A 209-amino-acid polypeptide reads, in one-letter code: Protein GrpE (209 aa).

Positions 1–13 are enriched in polar residues; sequence MSNDSSKAKQNQV. The disordered stretch occupies residues 1–27; that stretch reads MSNDSSKAKQNQVDEAVEGEIITDNEN. Residues 15–27 show a composition bias toward acidic residues; that stretch reads EAVEGEIITDNEN.

Belongs to the GrpE family. Homodimer.

Its subcellular location is the cytoplasm. In terms of biological role, participates actively in the response to hyperosmotic and heat shock by preventing the aggregation of stress-denatured proteins, in association with DnaK and GrpE. It is the nucleotide exchange factor for DnaK and may function as a thermosensor. Unfolded proteins bind initially to DnaJ; upon interaction with the DnaJ-bound protein, DnaK hydrolyzes its bound ATP, resulting in the formation of a stable complex. GrpE releases ADP from DnaK; ATP binding to DnaK triggers the release of the substrate protein, thus completing the reaction cycle. Several rounds of ATP-dependent interactions between DnaJ, DnaK and GrpE are required for fully efficient folding. The chain is Protein GrpE from Shewanella sediminis (strain HAW-EB3).